The sequence spans 717 residues: MQKFTFFVSCAKGIELLLKDELERLGISSQEKLAGVEFEGSIKDAYKVCIYSYLASQVMLKVATDKVINQQDLYEFISSINWMDYFAVDKTFKIIISGKHYDFNNTMFVSQKTKDAIVDQFRNVTNQRPNIDTENPDNVIKLHLHKQFVNVFLCLNIDSLHKRSYRQFQGQAPLKESLAAAILIKAGWLEELKKHQPILIDPMCGSGTILIEAALMAKNIAPVLLNKEFKIFNSKFHNQELWDNLLEIAKNSQKVTNAIICGFDIDNNVLDKAQRNIYQAGVEDVITVKRQDIRDLENEFESEGLIVTNPPYGERLYGDQLDELLDIFNGFGNRLSQDFYGWKVAVLTSFADSIKEMQLRTTERNKFYNGAIETILYQFEINEHAKFKHETQLEKNIRIAEASAQKSDEHIDFANKLKKNLKSLKPWLKQTGLECYRLYDADIPTFAVAVDVYSEHIFLQEYRADATIDQNIAKQRFYQAIYQIHKTLDIKYENIHTRVRQRQKGKEQYQKENDKNKFHIINEFDAKFYVNFDDYLDTGIFLDHRKIRQLVAKAAKNKTLLNLFSYTCTASVHAALKGAKTTSVDMSNTYLEWGKNNFTLNNIDAKKHSFIQADCISWLKTNKDKFDVIFLDPPTFSNSKRMDDILDIQRDHELLINLAMDSLKKDGILYFSNNYRRFKMSPQILEKFNCENIDKICLSRDFLSNKNIHNCWEIKYK.

A THUMP domain is found at 44–155 (DAYKVCIYSY…KQFVNVFLCL (112 aa)).

The protein belongs to the methyltransferase superfamily. RlmKL family.

It localises to the cytoplasm. The catalysed reaction is guanosine(2445) in 23S rRNA + S-adenosyl-L-methionine = N(2)-methylguanosine(2445) in 23S rRNA + S-adenosyl-L-homocysteine + H(+). It carries out the reaction guanosine(2069) in 23S rRNA + S-adenosyl-L-methionine = N(2)-methylguanosine(2069) in 23S rRNA + S-adenosyl-L-homocysteine + H(+). Functionally, specifically methylates the guanine in position 2445 (m2G2445) and the guanine in position 2069 (m7G2069) of 23S rRNA. In Francisella tularensis subsp. tularensis (strain SCHU S4 / Schu 4), this protein is Ribosomal RNA large subunit methyltransferase K/L.